Reading from the N-terminus, the 377-residue chain is Guanine nucleotide-binding protein subunit beta-1 (377 aa).

WD repeat units follow at residues 63 to 93 (GHTG…IVWN), 105 to 135 (LPCA…SIFN), 154 to 185 (GHKG…VLWD), 202 to 233 (GHTA…RLWD), 246 to 276 (GHEG…RLFD), 293 to 323 (GDIP…YVWD), and 339 to 369 (SHEG…KIWA).

This sequence belongs to the WD repeat G protein beta family. In terms of assembly, g proteins are composed of 3 units, alpha, beta and gamma.

Its function is as follows. Guanine nucleotide-binding proteins (G proteins) are involved as a modulator or transducer in various transmembrane signaling systems. The beta and gamma chains are required for the GTPase activity, for replacement of GDP by GTP, and for G protein-effector interaction. The chain is Guanine nucleotide-binding protein subunit beta-1 from Nicotiana tabacum (Common tobacco).